The chain runs to 565 residues: NAD-dependent malic enzyme (565 aa).

Tyr104 acts as the Proton donor in catalysis. Arg157 provides a ligand contact to NAD(+). Lys175 acts as the Proton acceptor in catalysis. Glu246, Asp247, and Asp270 together coordinate a divalent metal cation. The NAD(+) site is built by Asp270 and Asn418.

This sequence belongs to the malic enzymes family. As to quaternary structure, homotetramer. Mg(2+) is required as a cofactor. It depends on Mn(2+) as a cofactor.

The enzyme catalyses (S)-malate + NAD(+) = pyruvate + CO2 + NADH. It catalyses the reaction oxaloacetate + H(+) = pyruvate + CO2. This is NAD-dependent malic enzyme from Shigella sonnei (strain Ss046).